Here is a 174-residue protein sequence, read N- to C-terminus: Calcium-binding protein F (174 aa).

EF-hand domains follow at residues 9 to 44, 60 to 83, 92 to 127, and 133 to 162; these read KIFQ…KMDG, VDMD…EAKK, AALA…NGHT, and DQVL…RRID. Residues aspartate 22, asparagine 24, aspartate 26, serine 28, and aspartate 33 each coordinate Ca(2+). The Ca(2+) site is built by aspartate 105, aspartate 107, aspartate 109, lysine 111, glutamate 116, aspartate 140, aspartate 142, aspartate 144, cysteine 146, and glutamate 151.

The protein is Calcium-binding protein F (cbpF) of Dictyostelium discoideum (Social amoeba).